The chain runs to 209 residues: Tektin bundle-interacting protein 1 (209 aa).

Microtubule inner protein component of sperm flagellar doublet microtubules.

It is found in the cytoplasm. It localises to the cytoskeleton. The protein localises to the cilium axoneme. The protein resides in the flagellum axoneme. Its function is as follows. Microtubule inner protein (MIP) part of the dynein-decorated doublet microtubules (DMTs) in cilia axoneme, which is required for motile cilia beating. Located at the center of the tektin bundle where may function to recruit tektins or stabilize the bundle. This Homo sapiens (Human) protein is Tektin bundle-interacting protein 1.